The chain runs to 285 residues: NAD kinase (285 aa).

The active-site Proton acceptor is Asp66. NAD(+)-binding positions include 66-67, 137-138, Arg148, Arg165, Asp167, and 178-183; these read DG, ND, and TAYSMS.

This sequence belongs to the NAD kinase family. Requires a divalent metal cation as cofactor.

It localises to the cytoplasm. The enzyme catalyses NAD(+) + ATP = ADP + NADP(+) + H(+). Involved in the regulation of the intracellular balance of NAD and NADP, and is a key enzyme in the biosynthesis of NADP. Catalyzes specifically the phosphorylation on 2'-hydroxyl of the adenosine moiety of NAD to yield NADP. The protein is NAD kinase of Chlorobium phaeobacteroides (strain DSM 266 / SMG 266 / 2430).